The primary structure comprises 299 residues: ATP phosphoribosyltransferase (299 aa).

This sequence belongs to the ATP phosphoribosyltransferase family. Long subfamily. As to quaternary structure, equilibrium between an active dimeric form, an inactive hexameric form and higher aggregates. Interconversion between the various forms is largely reversible and is influenced by the natural substrates and inhibitors of the enzyme. It depends on Mg(2+) as a cofactor.

Its subcellular location is the cytoplasm. It catalyses the reaction 1-(5-phospho-beta-D-ribosyl)-ATP + diphosphate = 5-phospho-alpha-D-ribose 1-diphosphate + ATP. The protein operates within amino-acid biosynthesis; L-histidine biosynthesis; L-histidine from 5-phospho-alpha-D-ribose 1-diphosphate: step 1/9. Its activity is regulated as follows. Feedback inhibited by histidine. Catalyzes the condensation of ATP and 5-phosphoribose 1-diphosphate to form N'-(5'-phosphoribosyl)-ATP (PR-ATP). Has a crucial role in the pathway because the rate of histidine biosynthesis seems to be controlled primarily by regulation of HisG enzymatic activity. This Proteus mirabilis (strain HI4320) protein is ATP phosphoribosyltransferase.